The following is an 842-amino-acid chain: Protein P (842 aa).

A terminal protein domain (TP) region spans residues 1-177 (MPLSYQHFRK…FCGSPYSWEQ (177 aa)). The interval 178-346 (ELQHGRLVFQ…YCLTHIVNLL (169 aa)) is spacer. A disordered region spans residues 218–274 (LKQSRLGLQPQQGSLARGKSGRSGSIRARVPPTTRRSFGVEPSGSGHIDNRASSTSS). The tract at residues 347-690 (EDWGPCTEHG…YLHLYPVARR (344 aa)) is polymerase/reverse transcriptase domain (RT). One can recognise a Reverse transcriptase domain in the interval 357–600 (EHNIRIPRTP…YSLNFMGYVI (244 aa)). The Mg(2+) site is built by Asp-429, Asp-551, and Asp-552.

The protein belongs to the hepadnaviridae P protein family.

The enzyme catalyses DNA(n) + a 2'-deoxyribonucleoside 5'-triphosphate = DNA(n+1) + diphosphate. It catalyses the reaction Endonucleolytic cleavage to 5'-phosphomonoester.. Activated by host HSP70 and HSP40 in vitro to be able to bind the epsilon loop of the pgRNA. Because deletion of the RNase H region renders the protein partly chaperone-independent, the chaperones may be needed indirectly to relieve occlusion of the RNA-binding site by this domain. Inhibited by several reverse-transcriptase inhibitors: Lamivudine, Adefovir and Entecavir. Its function is as follows. Multifunctional enzyme that converts the viral RNA genome into dsDNA in viral cytoplasmic capsids. This enzyme displays a DNA polymerase activity that can copy either DNA or RNA templates, and a ribonuclease H (RNase H) activity that cleaves the RNA strand of RNA-DNA heteroduplexes in a partially processive 3'- to 5'-endonucleasic mode. Neo-synthesized pregenomic RNA (pgRNA) are encapsidated together with the P protein, and reverse-transcribed inside the nucleocapsid. Initiation of reverse-transcription occurs first by binding the epsilon loop on the pgRNA genome, and is initiated by protein priming, thereby the 5'-end of (-)DNA is covalently linked to P protein. Partial (+)DNA is synthesized from the (-)DNA template and generates the relaxed circular DNA (RC-DNA) genome. After budding and infection, the RC-DNA migrates in the nucleus, and is converted into a plasmid-like covalently closed circular DNA (cccDNA). The activity of P protein does not seem to be necessary for cccDNA generation, and is presumably released from (+)DNA by host nuclear DNA repair machinery. This chain is Protein P, found in Hepatitis B virus genotype C subtype adr (isolate Korea/Kim/1989) (HBV-C).